Here is a 410-residue protein sequence, read N- to C-terminus: MWTGWWLWPLVAVCTADQFRDNAVRLMQSTPVIDGHNDLPWQLLKRFNNQLQDPRANLTSLNGTHTNIPKLKAGFVGAQFWSAYTPCDTQNKDSVKRTLEQIDVIQRMCQLYPETFLCVTDSAGIQQAFQEGKVASLVGVEGGHSIDSSLGVLRALYHLGMRYLTLTHSCNTPWADNWLVDTGEDEAQSQGLSSFGQSVVKEMNRLGVIIDLAHVSVATMEAALQLSKAPVIFSHSSAYSVCRHRRNVPDHVLQLVKQTGSLVMVNFYNDYVSCKAEANLSQVADHLDYIKKVAGAGAVGFGGDYDGVSRLPSGLEDVSKYPDLVAELLRRQWTEEEVRGALAENLLRVFKAVEQASDHKQAPGEEPIPLGQLEASCRTNYGYSGAPSLHLQPGTLLASLVTLLLSLCLL.

A signal peptide spans 1–16; the sequence is MWTGWWLWPLVAVCTA. 2 residues coordinate Zn(2+): H36 and D38. 2 N-linked (GlcNAc...) asparagine glycosylation sites follow: N57 and N62. C87 and C170 are joined by a disulfide. E141 contributes to the Zn(2+) binding site. Substrate is bound at residue H168. H214 and H235 together coordinate Zn(2+). C242 and C274 form a disulfide bridge. R246 contacts substrate. A glycan (N-linked (GlcNAc...) asparagine) is linked at N279. Substrate is bound at residue D304. A lipid anchor (GPI-anchor amidated serine) is attached at S384. The propeptide at 385–410 is removed in mature form; that stretch reads GAPSLHLQPGTLLASLVTLLLSLCLL.

This sequence belongs to the metallo-dependent hydrolases superfamily. Peptidase M19 family. In terms of assembly, homodimer; disulfide-linked. It depends on Zn(2+) as a cofactor.

It is found in the apical cell membrane. The enzyme catalyses an L-aminoacyl-L-amino acid + H2O = 2 an L-alpha-amino acid. The catalysed reaction is leukotriene D4 + H2O = leukotriene E4 + glycine. It catalyses the reaction L-cystine-bis-glycine + 2 H2O = L-cystine + 2 glycine. It carries out the reaction a beta-lactam + H2O = a substituted beta-amino acid. The enzyme catalyses glycyldehydrophenylalanine + H2O = 2,3-didehydrophenylalanine + glycine. Inhibited by L-penicillamine. Inhibited by cilastatin. Functionally, hydrolyzes a wide range of dipeptides including the conversion of leukotriene D4 to leukotriene E4. Hydrolyzes cystinyl-bis-glycine (cys-bis-gly) formed during glutathione degradation. Also possesses beta lactamase activity and hydrolytically inactivates beta-lactam antibiotics. Independently of its dipeptidase activity, acts as an adhesion receptor for neutrophil recruitment from bloodstream into inflamed lungs and liver. The sequence is that of Dipeptidase 1 (DPEP1) from Bos taurus (Bovine).